The chain runs to 201 residues: Small ribosomal subunit protein uS4c (201 aa).

The interval 15 to 43 is disordered; the sequence is LGALPGLTRKRPRSGSDLRNQSRSGKRSQ. In terms of domain architecture, S4 RNA-binding spans 89-150; sequence MRLDNILFRL…EQRSRALIQN (62 aa).

It belongs to the universal ribosomal protein uS4 family. In terms of assembly, part of the 30S ribosomal subunit. Contacts protein S5. The interaction surface between S4 and S5 is involved in control of translational fidelity.

The protein resides in the plastid. It is found in the chloroplast. Functionally, one of the primary rRNA binding proteins, it binds directly to 16S rRNA where it nucleates assembly of the body of the 30S subunit. Its function is as follows. With S5 and S12 plays an important role in translational accuracy. This chain is Small ribosomal subunit protein uS4c (rps4), found in Drimys granadensis.